A 617-amino-acid polypeptide reads, in one-letter code: COMPASS component cclA (617 aa).

2 stretches are compositionally biased toward low complexity: residues 1 to 19 (MASI…INSP) and 40 to 50 (SSPAPASNASA). The segment at 1–89 (MASIQPAGSS…AKKRATAVQN (89 aa)) is disordered. Over residues 57–69 (SKRNKRDSRKKRE) the composition is skewed to basic residues. The B30.2/SPRY domain maps to 157-380 (IADTSFPHIK…YAFNLKETPT (224 aa)). Residues 595 to 617 (TPNTEEPAARPENITVGHDVEMS) are disordered.

It belongs to the cclA family. In terms of assembly, component of the COMPASS complex.

Its subcellular location is the nucleus. It is found in the chromosome. The protein resides in the telomere. Its function is as follows. Component of the COMPASS (Set1C) complex that specifically mono-, di- and trimethylates histone H3 to form H3K4me1/2/3, which subsequently plays a role in telomere length maintenance and transcription elongation regulation. Controls the production of several secondary metabolites, including astellolides. The sequence is that of COMPASS component cclA from Aspergillus oryzae (strain ATCC 42149 / RIB 40) (Yellow koji mold).